Reading from the N-terminus, the 395-residue chain is Proteinase-activated receptor 2 (395 aa).

The signal sequence occupies residues 1 to 25; the sequence is MRSPSAAWLLGGVLLLAASGSCNRT. 2 N-linked (GlcNAc...) asparagine glycosylation sites follow: Asn23 and Asn29. Positions 26-34 are cleaved as a propeptide — removed for receptor activation; it reads VPGNKSKGR. Residues 35–69 are Extracellular-facing; sequence SLIGNVDNSPVVAGRGVTVKPGFSVDEFSTSVLTG. Residues 70–99 form a helical membrane-spanning segment; it reads KLTTVFLPVVYTIVFVVGLPSNGMALWVFL. Over 100-106 the chain is Cytoplasmic; the sequence is FRTKKKH. The chain crosses the membrane as a helical span at residues 107–135; the sequence is PAVIYMANLALADLLSVTWFPLKIAYHIH. Topologically, residues 136–147 are extracellular; the sequence is GNNWIYGESLCK. The cysteines at positions 146 and 224 are disulfide-linked. The chain crosses the membrane as a helical span at residues 148–175; that stretch reads VLIGFFYGNMYCSILFMTCLSVQRYWVI. The Cytoplasmic segment spans residues 176–181; that stretch reads VNPMVH. A helical membrane pass occupies residues 182–209; the sequence is PKKQANIAIGVSLGIWLLILLLTIPLYV. The Extracellular segment spans residues 210-233; the sequence is VKQTSYIRALNITTCHDVLPEEVL. N-linked (GlcNAc...) asparagine glycosylation is present at Asn220. Residues 234–267 traverse the membrane as a helical segment; the sequence is VGDMFNYFLSLAIGVFLFPAFLTASAYVLMIRTL. Residues 268–275 lie on the Cytoplasmic side of the membrane; it reads QSSAMDES. The helical transmembrane segment at 276 to 315 threads the bilayer; the sequence is SGKKRRRAIKLIVTVLAMYLICFTPSNLLLVVHYFLIKTR. Residues 316–321 are Extracellular-facing; sequence GQSHVY. Residues 322–345 traverse the membrane as a helical segment; that stretch reads ALYIVALCLSTLNSCIDPFVYYFI. Residues 346 to 395 lie on the Cytoplasmic side of the membrane; it reads SQDFRDHAKNALLCRSVRTVKRMQVSLSSKKFSGKSSSYSSSSTSVKGSY. Residue Cys359 is the site of S-palmitoyl cysteine attachment.

It belongs to the G-protein coupled receptor 1 family. Interacts with TLR4, COPS5 and TMED2. Interacts with GNAQ, GNA11, GNA12, GNA13 and GNA14. A proteolytic cleavage generates a new N-terminus that functions as a tethered ligand. Activating serine proteases include trypsin, mast cell tryptase, coagulation factors VII and Xa, myeloblastin/PRTN3 and membrane-type serine protease 1/ST14. Proposed subsequent cleavage by serine proteases is leading to receptor deactivation and include neutrophil elastase and cathepsin G. At least in part, implicated proteases are also shown to activate the receptor; the glycosylation status of the receptor is thought to contribute to the difference. In terms of processing, N-glycosylated and sialylated. Post-translationally, multiple phosphorylated on serine and threonine residues in the cytoplasmic region upon receptor activation; required for receptor desensitization and recruitment of beta-arrestin. Monoubiquitinated by CBL at the plasma membrane and in early endosomes; not required for receptor endocytosis but for translocation to late endosomes or lysosomes. Deubiquitination involves STAMBP and USP8; required for lysosomal trafficking and receptor degradation.

Its subcellular location is the cell membrane. Its function is as follows. Receptor for trypsin and trypsin-like enzymes coupled to G proteins. Its function is mediated through the activation of several signaling pathways including phospholipase C (PLC), intracellular calcium, mitogen-activated protein kinase (MAPK), I-kappaB kinase/NF-kappaB and Rho. Can also be transactivated by cleaved F2R/PAR1. Involved in modulation of inflammatory responses and regulation of innate and adaptive immunity, and acts as a sensor for proteolytic enzymes generated during infection. Generally is promoting inflammation. Can signal synergistically with TLR4 and probably TLR2 in inflammatory responses and modulates TLR3 signaling. Has a protective role in establishing the endothelial barrier; the activity involves coagulation factor X. Regulates endothelial cell barrier integrity during neutrophil extravasation, probably following proteolytic cleavage by PRTN3. Proposed to have a bronchoprotective role in airway epithelium, but also shown to compromise the airway epithelial barrier by interrupting E-cadherin adhesion. Involved in the regulation of vascular tone; activation results in hypotension presumably mediated by vasodilation. Associates with a subset of G proteins alpha subunits such as GNAQ, GNA11, GNA14, GNA12 and GNA13, but probably not with G(o) alpha, G(i) subunit alpha-1 and G(i) subunit alpha-2. Believed to be a class B receptor which internalizes as a complex with arrestin and traffic with it to endosomal vesicles, presumably as desensitized receptor, for extended periods of time. Mediates inhibition of TNF-alpha stimulated JNK phosphorylation via coupling to GNAQ and GNA11; the function involves dissociation of RIPK1 and TRADD from TNFR1. Mediates phosphorylation of nuclear factor NF-kappa-B RELA subunit at 'Ser-536'; the function involves IKBKB and is predominantly independent of G proteins. Involved in cellular migration. Involved in cytoskeletal rearrangement and chemotaxis through beta-arrestin-promoted scaffolds; the function is independent of GNAQ and GNA11 and involves promotion of cofilin dephosphorylation and actin filament severing. Induces redistribution of COPS5 from the plasma membrane to the cytosol and activation of the JNK cascade is mediated by COPS5. Involved in the recruitment of leukocytes to the sites of inflammation and is the major PAR receptor capable of modulating eosinophil function such as pro-inflammatory cytokine secretion, superoxide production and degranulation. During inflammation promotes dendritic cell maturation, trafficking to the lymph nodes and subsequent T-cell activation. Involved in antimicrobial response of innate immune cells; activation enhances phagocytosis of Gram-positive and killing of Gram-negative bacteria. Acts synergistically with interferon-gamma in enhancing antiviral responses. Probably mediates activation of pro-inflammatory and pro-fibrotic responses in fibroblasts, triggered by coagulation factor Xa (F10). Probably mediates activation of barrier protective signaling responses in endothelial cells, triggered by coagulation factor Xa (F10). The protein is Proteinase-activated receptor 2 (F2RL1) of Bos taurus (Bovine).